A 108-amino-acid chain; its full sequence is Nucleoid-associated protein BamMC406_1737 (108 aa).

Over residues 85 to 95 the composition is skewed to polar residues; that stretch reads ATSQEKMSGMT. The interval 85-108 is disordered; it reads ATSQEKMSGMTSGLPLPPGFKLPF. Pro residues predominate over residues 99-108; it reads PLPPGFKLPF.

This sequence belongs to the YbaB/EbfC family. In terms of assembly, homodimer.

It is found in the cytoplasm. The protein resides in the nucleoid. In terms of biological role, binds to DNA and alters its conformation. May be involved in regulation of gene expression, nucleoid organization and DNA protection. The polypeptide is Nucleoid-associated protein BamMC406_1737 (Burkholderia ambifaria (strain MC40-6)).